The chain runs to 415 residues: MAVKPRRNAVVVDVGGVKVGGTHPIVVQSMTNTDTADVASTVNQVMALARAGSELVRVTVNTEAAAAAVPKIVDACAAFGVRVPIIGDFHYNGHLLLKKYPECARALAKYRINPGNSDIGRKTDDNFRTMIEVAIENRKPVRIGVNWGSLDSALLTRMMDENSLLPEPKDAREVTLDAMVASAVQSARAAERHGLAHDQIILSAKVSGVQDLIDVYRALAAVCDYPLHLGLTEAGLGSKGIVATTAALAPVLQDGIGDTIRTSLTPMPNGDRTEEVIVSQQILQSLGIRSFTPQVTACPGCGRTTSTFFQEMADEIQTYLRVQMPSWKATHPGVETMKVAVMGCVVNGPGESKHSNIGISLPGTFEEPKAPVYVDGRLMTTLKGDRIVAEFLEILNEYVDTHYAIAGEPELVSGD.

The [4Fe-4S] cluster site is built by C298, C301, C344, and E351.

It belongs to the IspG family. Requires [4Fe-4S] cluster as cofactor.

The enzyme catalyses (2E)-4-hydroxy-3-methylbut-2-enyl diphosphate + oxidized [flavodoxin] + H2O + 2 H(+) = 2-C-methyl-D-erythritol 2,4-cyclic diphosphate + reduced [flavodoxin]. It functions in the pathway isoprenoid biosynthesis; isopentenyl diphosphate biosynthesis via DXP pathway; isopentenyl diphosphate from 1-deoxy-D-xylulose 5-phosphate: step 5/6. In terms of biological role, converts 2C-methyl-D-erythritol 2,4-cyclodiphosphate (ME-2,4cPP) into 1-hydroxy-2-methyl-2-(E)-butenyl 4-diphosphate. In Solibacter usitatus (strain Ellin6076), this protein is 4-hydroxy-3-methylbut-2-en-1-yl diphosphate synthase (flavodoxin).